The chain runs to 487 residues: NADH-quinone oxidoreductase subunit N (487 aa).

Helical transmembrane passes span 7–27 (LTLILPEIVMAISAMALILIT), 37–57 (LVSILAAATLGAAAVMVAPAL), 81–101 (FAKILIYLSAIGCLMIAPAFF), 112–132 (PVLVLLATLGMSIMVSAGDLI), 166–186 (FVLGALASGILLYGMSLVYGF), 207–227 (ALFGVIFVLAGLAFKIAAVPF), 237–257 (GAPTPVTTFFATAPKVAAVAL), 276–296 (IVIFAALASIVLGALGAIGQT), 307–327 (INNVGFILIGLAASTVAGLSA), 329–349 (LTYLAIYVVMALGSFVALLML), 373–393 (LAWCLLFLMFSLAGIPPLLGF), 407–427 (DMVLLAALGIAASVIGAFYYI), and 452–472 (VLLILAAVVVSPLGYLLTGWL).

This sequence belongs to the complex I subunit 2 family. In terms of assembly, NDH-1 is composed of 14 different subunits. Subunits NuoA, H, J, K, L, M, N constitute the membrane sector of the complex.

It is found in the cell inner membrane. It carries out the reaction a quinone + NADH + 5 H(+)(in) = a quinol + NAD(+) + 4 H(+)(out). Its function is as follows. NDH-1 shuttles electrons from NADH, via FMN and iron-sulfur (Fe-S) centers, to quinones in the respiratory chain. The immediate electron acceptor for the enzyme in this species is believed to be ubiquinone. Couples the redox reaction to proton translocation (for every two electrons transferred, four hydrogen ions are translocated across the cytoplasmic membrane), and thus conserves the redox energy in a proton gradient. This chain is NADH-quinone oxidoreductase subunit N, found in Erythrobacter litoralis (strain HTCC2594).